Consider the following 414-residue polypeptide: Tryptophan synthase beta chain (414 aa).

Lys-109 carries the post-translational modification N6-(pyridoxal phosphate)lysine.

It belongs to the TrpB family. Tetramer of two alpha and two beta chains. Requires pyridoxal 5'-phosphate as cofactor.

The enzyme catalyses (1S,2R)-1-C-(indol-3-yl)glycerol 3-phosphate + L-serine = D-glyceraldehyde 3-phosphate + L-tryptophan + H2O. It functions in the pathway amino-acid biosynthesis; L-tryptophan biosynthesis; L-tryptophan from chorismate: step 5/5. Functionally, the beta subunit is responsible for the synthesis of L-tryptophan from indole and L-serine. The protein is Tryptophan synthase beta chain of Prochlorococcus marinus (strain AS9601).